Reading from the N-terminus, the 176-residue chain is Large ribosomal subunit protein uL10 (176 aa).

This sequence belongs to the universal ribosomal protein uL10 family. In terms of assembly, part of the ribosomal stalk of the 50S ribosomal subunit. The N-terminus interacts with L11 and the large rRNA to form the base of the stalk. The C-terminus forms an elongated spine to which L12 dimers bind in a sequential fashion forming a multimeric L10(L12)X complex.

In terms of biological role, forms part of the ribosomal stalk, playing a central role in the interaction of the ribosome with GTP-bound translation factors. The chain is Large ribosomal subunit protein uL10 from Saccharophagus degradans (strain 2-40 / ATCC 43961 / DSM 17024).